A 916-amino-acid chain; its full sequence is Protein translocase subunit SecA (916 aa).

ATP contacts are provided by residues Gln-87, 105-109, and Asp-512; that span reads GEGKT. Residues 857–916 are disordered; that stretch reads QHAEAPSMEQAVAGEDEELPEGPAPVVPLEPVRNEQKIGRNEPCPCGSGKKYKHCHGQLD. Cys-900, Cys-902, Cys-911, and His-912 together coordinate Zn(2+). The span at 906–916 shows a compositional bias: basic residues; the sequence is KKYKHCHGQLD.

This sequence belongs to the SecA family. As to quaternary structure, monomer and homodimer. Part of the essential Sec protein translocation apparatus which comprises SecA, SecYEG and auxiliary proteins SecDF-YajC and YidC. Zn(2+) serves as cofactor.

It localises to the cell inner membrane. The protein resides in the cytoplasm. The catalysed reaction is ATP + H2O + cellular proteinSide 1 = ADP + phosphate + cellular proteinSide 2.. Its function is as follows. Part of the Sec protein translocase complex. Interacts with the SecYEG preprotein conducting channel. Has a central role in coupling the hydrolysis of ATP to the transfer of proteins into and across the cell membrane, serving both as a receptor for the preprotein-SecB complex and as an ATP-driven molecular motor driving the stepwise translocation of polypeptide chains across the membrane. The chain is Protein translocase subunit SecA from Pseudomonas paraeruginosa (strain DSM 24068 / PA7) (Pseudomonas aeruginosa (strain PA7)).